The primary structure comprises 268 residues: GTP cyclohydrolase III (268 aa).

Belongs to the archaeal-type GTP cyclohydrolase family. As to quaternary structure, homotrimer. The cofactor is Mg(2+).

It carries out the reaction GTP + 3 H2O = 2-amino-5-formylamino-6-(5-phospho-D-ribosylamino)pyrimidin-4(3H)-one + 2 phosphate + 2 H(+). Functionally, catalyzes the formation of 2-amino-5-formylamino-6-ribofuranosylamino-4(3H)-pyrimidinone ribonucleotide monophosphate and inorganic phosphate from GTP. Also has an independent pyrophosphate phosphohydrolase activity. This Methanocaldococcus jannaschii (strain ATCC 43067 / DSM 2661 / JAL-1 / JCM 10045 / NBRC 100440) (Methanococcus jannaschii) protein is GTP cyclohydrolase III (gch3).